A 528-amino-acid polypeptide reads, in one-letter code: Probable rhamnogalacturonate lyase A (528 aa).

An N-terminal signal peptide occupies residues 1 to 20; that stretch reads MLSKATLLLSLPFWARVANA. Asparagine 46 carries N-linked (GlcNAc...) asparagine glycosylation. Cystine bridges form between cysteine 50-cysteine 93 and cysteine 184-cysteine 193. The N-linked (GlcNAc...) asparagine glycan is linked to asparagine 351.

The protein belongs to the polysaccharide lyase 4 family.

The protein localises to the secreted. It carries out the reaction Endotype eliminative cleavage of L-alpha-rhamnopyranosyl-(1-&gt;4)-alpha-D-galactopyranosyluronic acid bonds of rhamnogalacturonan I domains in ramified hairy regions of pectin leaving L-rhamnopyranose at the reducing end and 4-deoxy-4,5-unsaturated D-galactopyranosyluronic acid at the non-reducing end.. Functionally, pectinolytic enzymes consist of four classes of enzymes: pectin lyase, polygalacturonase, pectin methylesterase and rhamnogalacturonase. Degrades the rhamnogalacturonan I (RG-I) backbone of pectin. The sequence is that of Probable rhamnogalacturonate lyase A (rglA) from Neosartorya fischeri (strain ATCC 1020 / DSM 3700 / CBS 544.65 / FGSC A1164 / JCM 1740 / NRRL 181 / WB 181) (Aspergillus fischerianus).